The sequence spans 212 residues: Glycerol-3-phosphate acyltransferase (212 aa).

The next 5 helical transmembrane spans lie at 9 to 29, 67 to 87, 95 to 115, 128 to 148, and 168 to 190; these read AACL…GYLL, GPAL…VLLA, WLQV…VWLG, MFLG…MAVI, and LMVV…LMVL.

It belongs to the PlsY family. In terms of assembly, probably interacts with PlsX.

The protein resides in the cell inner membrane. The catalysed reaction is an acyl phosphate + sn-glycerol 3-phosphate = a 1-acyl-sn-glycero-3-phosphate + phosphate. The protein operates within lipid metabolism; phospholipid metabolism. Catalyzes the transfer of an acyl group from acyl-phosphate (acyl-PO(4)) to glycerol-3-phosphate (G3P) to form lysophosphatidic acid (LPA). This enzyme utilizes acyl-phosphate as fatty acyl donor, but not acyl-CoA or acyl-ACP. In Parasynechococcus marenigrum (strain WH8102), this protein is Glycerol-3-phosphate acyltransferase.